The sequence spans 560 residues: 2-succinyl-5-enolpyruvyl-6-hydroxy-3-cyclohexene-1-carboxylate synthase (560 aa).

The protein belongs to the TPP enzyme family. MenD subfamily. Homodimer. The cofactor is Mg(2+). Requires Mn(2+) as cofactor. Thiamine diphosphate serves as cofactor.

It carries out the reaction isochorismate + 2-oxoglutarate + H(+) = 5-enolpyruvoyl-6-hydroxy-2-succinyl-cyclohex-3-ene-1-carboxylate + CO2. It functions in the pathway quinol/quinone metabolism; 1,4-dihydroxy-2-naphthoate biosynthesis; 1,4-dihydroxy-2-naphthoate from chorismate: step 2/7. Its pathway is quinol/quinone metabolism; menaquinone biosynthesis. Functionally, catalyzes the thiamine diphosphate-dependent decarboxylation of 2-oxoglutarate and the subsequent addition of the resulting succinic semialdehyde-thiamine pyrophosphate anion to isochorismate to yield 2-succinyl-5-enolpyruvyl-6-hydroxy-3-cyclohexene-1-carboxylate (SEPHCHC). This Lactococcus lactis subsp. lactis (strain IL1403) (Streptococcus lactis) protein is 2-succinyl-5-enolpyruvyl-6-hydroxy-3-cyclohexene-1-carboxylate synthase.